Here is a 101-residue protein sequence, read N- to C-terminus: uncharacterized protein (101 aa).

The first 23 residues, 1-23 (MERRTGVVLIIFVTFCEAMMARA), serve as a signal peptide directing secretion. The chain crosses the membrane as a helical span at residues 38-58 (FLLFIIHTSCTMVAFIIGNLA).

The protein localises to the host membrane. This is an uncharacterized protein from Cryphonectria parasitica (Chestnut blight fungus).